The chain runs to 352 residues: MEGISIYTSDNYTEEMGSGDYDSIKEPCFREENAHFNRIFLPTIYSIIFLTGIVGNGLVILVMGYQKKLRSMTDKYRLHLSVADLLFVITLPFWAVDAVANWYFGNFLCKAVHVIYTVNLYSSVLILAFISLDRYLAIVHATNSQKPRKLLAEKVVYVGVWIPALLLTIPDFIFASVSEADDRYICDRFYPNDLWVVVFQFQHIMVGLILPGIVILSCYCIIISKLSHSKGHQKRKALKTTVILILAFFACWLPYYIGISIDSFILLEIIKQGCEFENTVHKWISITEALAFFHCCLNPILYAFLGAKFKTSAQHALTSVSRGSSLKILSKGKRGGHSSVSTESESSSFHSS.

The interval 1–21 (MEGISIYTSDNYTEEMGSGDY) is important for chemokine binding and signaling. Residues 1-38 (MEGISIYTSDNYTEEMGSGDYDSIKEPCFREENAHFNR) lie on the Extracellular side of the membrane. Sulfotyrosine is present on Tyr-7. N-linked (GlcNAc...) asparagine glycosylation occurs at Asn-11. Sulfotyrosine is present on Tyr-12. Ser-18 carries O-linked (Xyl...) (chondroitin sulfate) serine glycosylation. Sulfotyrosine is present on Tyr-21. Cystine bridges form between Cys-28-Cys-274 and Cys-109-Cys-186. The chain crosses the membrane as a helical span at residues 39–63 (IFLPTIYSIIFLTGIVGNGLVILVM). Residues 64-77 (GYQKKLRSMTDKYR) are Cytoplasmic-facing. Residues 78-99 (LHLSVADLLFVITLPFWAVDAV) traverse the membrane as a helical segment. Residues 94–97 (WAVD) form a chemokine binding region. Topologically, residues 100–110 (ANWYFGNFLCK) are extracellular. The helical transmembrane segment at 111–130 (AVHVIYTVNLYSSVLILAFI) threads the bilayer. Residues 113-117 (HVIYT) form a chemokine binding region. The Cytoplasmic portion of the chain corresponds to 131–154 (SLDRYLAIVHATNSQKPRKLLAEK). An Important for signaling motif is present at residues 133–135 (DRY). Positions 135–147 (YLAIVHATNSQKP) are involved in dimerization; when bound to chemokine. Residues 155–174 (VVYVGVWIPALLLTIPDFIF) form a helical membrane-spanning segment. The Extracellular portion of the chain corresponds to 175–195 (ASVSEADDRYICDRFYPNDLW). Residues 186 to 190 (CDRFY) form a chemokine binding, important for signaling region. Positions 191–210 (PNDLWVVVFQFQHIMVGLIL) are involved in dimerization. The helical transmembrane segment at 196–216 (VVVFQFQHIMVGLILPGIVIL) threads the bilayer. Residues 217 to 241 (SCYCIIISKLSHSKGHQKRKALKTT) lie on the Cytoplasmic side of the membrane. The helical transmembrane segment at 242–261 (VILILAFFACWLPYYIGISI) threads the bilayer. Topologically, residues 262 to 282 (DSFILLEIIKQGCEFENTVHK) are extracellular. The tract at residues 266 to 268 (LLE) is involved in dimerization. The helical transmembrane segment at 283–302 (WISITEALAFFHCCLNPILY) threads the bilayer. Topologically, residues 303–352 (AFLGAKFKTSAQHALTSVSRGSSLKILSKGKRGGHSSVSTESESSSFHSS) are cytoplasmic. Phosphoserine is present on residues Ser-319 and Ser-321. Phosphoserine; by PKC and GRK6 is present on residues Ser-324 and Ser-325. Residues 329 to 352 (LSKGKRGGHSSVSTESESSSFHSS) are disordered. Position 330 is a phosphoserine; by GRK6 (Ser-330). Lys-331 is covalently cross-linked (Glycyl lysine isopeptide (Lys-Gly) (interchain with G-Cter in ubiquitin)). Low complexity predominate over residues 337–352 (HSSVSTESESSSFHSS). Ser-339 bears the Phosphoserine; by GRK6 mark. 2 positions are modified to phosphoserine: Ser-348 and Ser-351.

It belongs to the G-protein coupled receptor 1 family. In terms of assembly, monomer. Can form homodimers. Interacts with CD164. Interacts with ARRB2; the interaction is dependent on the C-terminal phosphorylation of CXCR4 and allows activation of MAPK1 and MAPK3. Interacts with ARR3; the interaction is dependent on the C-terminal phosphorylation of CXCR4 and modulates calcium mobilization. Interacts with RNF113A; the interaction, enhanced by CXCL12, promotes CXCR4 ubiquitination and subsequent degradation. Interacts (via the cytoplasmic C-terminal) with ITCH (via the WW domains I and II); the interaction, enhanced by CXCL12, promotes CXCR4 ubiquitination and leads to its degradation. Interacts with extracellular ubiquitin. Interacts with DBN1; this interaction is enhanced by antigenic stimulation. Following LPS binding, may form a complex with GDF5, HSP90AA1 and HSPA8. In terms of processing, phosphorylated on agonist stimulation. Rapidly phosphorylated on serine and threonine residues in the C-terminal. Phosphorylation at Ser-324 and Ser-325 leads to recruitment of ITCH, ubiquitination and protein degradation. Post-translationally, ubiquitinated after ligand binding, leading to its degradation. Ubiquitinated by ITCH at the cell membrane on agonist stimulation. The ubiquitin-dependent mechanism, endosomal sorting complex required for transport (ESCRT), then targets CXCR4 for lysosomal degradation. This process is dependent also on prior Ser-/Thr-phosphorylation in the C-terminal of CXCR4. Also binding of ARRB1 to STAM negatively regulates CXCR4 sorting to lysosomes though modulating ubiquitination of SFR5S. Sulfation is required for efficient binding of CXCL12/SDF-1alpha and promotes its dimerization. In terms of processing, O- and N-glycosylated. N-glycosylation can mask coreceptor function. The O-glycosylation chondroitin sulfate attachment does not affect interaction with CXCL12/SDF-1alpha nor its coreceptor activity.

The protein localises to the cell membrane. The protein resides in the cell junction. It localises to the early endosome. It is found in the late endosome. Its subcellular location is the lysosome. Functionally, receptor for the C-X-C chemokine CXCL12/SDF-1 that transduces a signal by increasing intracellular calcium ion levels and enhancing MAPK1/MAPK3 activation. Involved in the AKT signaling cascade. Plays a role in regulation of cell migration, e.g. during wound healing. Acts as a receptor for extracellular ubiquitin; leading to enhanced intracellular calcium ions and reduced cellular cAMP levels. Binds bacterial lipopolysaccharide (LPS) et mediates LPS-induced inflammatory response, including TNF secretion by monocytes. Involved in hematopoiesis and in cardiac ventricular septum formation. Also plays an essential role in vascularization of the gastrointestinal tract, probably by regulating vascular branching and/or remodeling processes in endothelial cells. Involved in cerebellar development. In the CNS, could mediate hippocampal-neuron survival. The sequence is that of C-X-C chemokine receptor type 4 (CXCR4) from Macaca fascicularis (Crab-eating macaque).